Consider the following 1265-residue polypeptide: Guanine nucleotide exchange factor SDC25 (1265 aa).

The 72-residue stretch at 26–97 (QPIDVVECTY…PPSFTRSILN (72 aa)) folds into the SH3 domain. 2 disordered regions span residues 409 to 454 (IPAS…DTIW) and 623 to 648 (LNLD…DEYE). The segment covering 416 to 428 (TSCSSETSHHSPS) has biased composition (low complexity). Residues 782 to 914 (SNNRIKGGSK…LLKEVNQKFK (133 aa)) form the N-terminal Ras-GEF domain. Residues 952-1199 (DPVLFATQLT…YQLSLIIEPK (248 aa)) enclose the Ras-GEF domain. The segment at 1201-1252 (RKKVVPNSNSNNKSQEKSRDDQTDEGKTSTKKDRFSKFQLHKTKKKAPKVSK) is disordered. Residues 1214–1236 (SQEKSRDDQTDEGKTSTKKDRFS) show a composition bias toward basic and acidic residues. The segment covering 1239–1252 (QLHKTKKKAPKVSK) has biased composition (basic residues).

Functionally, promotes the exchange of Ras-bound GDP by GTP. The sequence is that of Guanine nucleotide exchange factor SDC25 (SDC25) from Saccharomyces cerevisiae (strain AWRI1631) (Baker's yeast).